The chain runs to 955 residues: GPI inositol-deacylase B (955 aa).

Asn7 is a glycosylation site (N-linked (GlcNAc...) asparagine). The helical transmembrane segment at 8–28 threads the bilayer; the sequence is ASVALWTVFTILTIWISFALH. Ser180 is an active-site residue. Asn431 is a glycosylation site (N-linked (GlcNAc...) asparagine). Transmembrane regions (helical) follow at residues 489 to 509, 600 to 620, 643 to 663, and 703 to 723; these read IAFP…SGGV, LLFS…FWRY, YLSW…FEFI, and PIGV…VVVV. N-linked (GlcNAc...) asparagine glycosylation is present at Asn753. Helical transmembrane passes span 772–792, 840–860, and 870–890; these read VIIA…LAFA, TMSV…AVWV, and IFSS…IENL. N-linked (GlcNAc...) asparagine glycosylation is present at Asn914. A helical transmembrane segment spans residues 919-939; the sequence is GMMHAFMIHHWFNLLAGWLLI. Asn945 is a glycosylation site (N-linked (GlcNAc...) asparagine).

Belongs to the GPI inositol-deacylase family.

The protein resides in the endoplasmic reticulum membrane. Its function is as follows. Involved in inositol deacylation of GPI-anchored proteins which plays important roles in the quality control and ER-associated degradation of GPI-anchored proteins. This Yarrowia lipolytica (strain CLIB 122 / E 150) (Yeast) protein is GPI inositol-deacylase B (BST1B).